The primary structure comprises 279 residues: Phosphonates import ATP-binding protein PhnC 2 (279 aa).

Positions 10-253 (LSLKGVSVRY…VARNLYAKQS (244 aa)) constitute an ABC transporter domain. 43-50 (GASGAGKS) contributes to the ATP binding site. Low complexity predominate over residues 253–262 (SNASNTSAST). The tract at residues 253–279 (SNASNTSASTDSPRTLQSSQTKELLPC) is disordered. Polar residues predominate over residues 263 to 279 (DSPRTLQSSQTKELLPC).

This sequence belongs to the ABC transporter superfamily. Phosphonates importer (TC 3.A.1.9.1) family. As to quaternary structure, the complex is composed of two ATP-binding proteins (PhnC), two transmembrane proteins (PhnE) and a solute-binding protein (PhnD).

It is found in the cell inner membrane. The catalysed reaction is phosphonate(out) + ATP + H2O = phosphonate(in) + ADP + phosphate + H(+). Part of the ABC transporter complex PhnCDE involved in phosphonates import. Responsible for energy coupling to the transport system. This Cupriavidus metallidurans (strain ATCC 43123 / DSM 2839 / NBRC 102507 / CH34) (Ralstonia metallidurans) protein is Phosphonates import ATP-binding protein PhnC 2.